The primary structure comprises 166 residues: Interferon gamma (166 aa).

An N-terminal signal peptide occupies residues 1 to 23 (MKYTSYFLALLLCGLLGFSGSYG). Pyrrolidone carboxylic acid is present on Q24. N-linked (GlcNAc...) asparagine glycosylation is found at N39 and N106.

The protein belongs to the type II (or gamma) interferon family. As to quaternary structure, homodimer. Interacts with IFNGR1 (via extracellular domain); this interaction promotes IFNGR1 dimerization. Released primarily from activated T lymphocytes.

It is found in the secreted. Type II interferon produced by immune cells such as T-cells and NK cells that plays crucial roles in antimicrobial, antiviral, and antitumor responses by activating effector immune cells and enhancing antigen presentation. Primarily signals through the JAK-STAT pathway after interaction with its receptor IFNGR1 to affect gene regulation. Upon IFNG binding, IFNGR1 intracellular domain opens out to allow association of downstream signaling components JAK2, JAK1 and STAT1, leading to STAT1 activation, nuclear translocation and transcription of IFNG-regulated genes. Many of the induced genes are transcription factors such as IRF1 that are able to further drive regulation of a next wave of transcription. Plays a role in class I antigen presentation pathway by inducing a replacement of catalytic proteasome subunits with immunoproteasome subunits. In turn, increases the quantity, quality, and repertoire of peptides for class I MHC loading. Increases the efficiency of peptide generation also by inducing the expression of activator PA28 that associates with the proteasome and alters its proteolytic cleavage preference. Up-regulates as well MHC II complexes on the cell surface by promoting expression of several key molecules such as cathepsins B/CTSB, H/CTSH, and L/CTSL. Participates in the regulation of hematopoietic stem cells during development and under homeostatic conditions by affecting their development, quiescence, and differentiation. The protein is Interferon gamma (IFNG) of Bos taurus (Bovine).